The chain runs to 289 residues: DDRGK domain-containing protein 1 (289 aa).

At 1–2 the chain is on the lumenal side; the sequence is MD. Residues 3–23 form a helical membrane-spanning segment; it reads PFILAAIISGIVIIILSIAFL. Residues 24 to 289 are Cytoplasmic-facing; that stretch reads RVSQVKPQAA…LINLAPVTVP (266 aa). The disordered stretch occupies residues 65-168; the sequence is RHQAALEEEP…DERKKREQEE (104 aa). Over residues 70–85 the composition is skewed to acidic residues; that stretch reads LEEEPEIQEEADEGAP. Positions 87–166 are enriched in basic and acidic residues; it reads IDQKIDFDDK…AEDERKKREQ (80 aa).

It belongs to the DDRGK1 family. In terms of assembly, interacts with Atg9; the interaction is transient.

The protein resides in the endoplasmic reticulum membrane. In terms of biological role, substrate adapter for ufmylation, the covalent attachment of the ubiquitin-like modifier UFM1 to substrate proteins. Required for ufmylation of Atg9; protects the nervous system during aging, possibly by stabilizing Atg9 and supporting its function. This Bombyx mori (Silk moth) protein is DDRGK domain-containing protein 1.